The primary structure comprises 424 residues: STAM-binding protein (424 aa).

The tract at residues 1–127 (MSDHGDVSLP…YEQYKERKKK (127 aa)) is interaction with CHMP3. A phosphoserine mark is found at S2 and S48. Residues 227 to 231 (PAKPP) are interaction with STAM. At S243 the chain carries Phosphoserine. The MPN domain maps to 257–388 (IVVPRNLCSE…LTDYGLQEIS (132 aa)). 7 residues coordinate Zn(2+): H335, H337, D348, H350, C390, H396, and H398. The JAMM motif signature appears at 335–348 (HTHPTQTAFLSSVD).

The protein belongs to the peptidase M67C family. Interacts with STAM. Interacts with SMAD6 and SMAD7. Interacts with CHMP3; the interaction appears to relieve the autoinhibition of CHMP3. Interacts with SMURF2 and RNF11; this interaction promotes ubiquitination. It depends on Zn(2+) as a cofactor. Phosphorylated after BMP type I receptor activation. Post-translationally, ubiquitinated by SMURF2 in the presence of RNF11. Expressed in brain.

It is found in the nucleus. Its subcellular location is the membrane. The protein localises to the cytoplasm. It localises to the early endosome. With respect to regulation, inhibited by N-ethylmaleimide. Zinc metalloprotease that specifically cleaves 'Lys-63'-linked polyubiquitin chains. Does not cleave 'Lys-48'-linked polyubiquitin chains. Plays a role in signal transduction for cell growth and MYC induction mediated by IL-2 and GM-CSF. Potentiates BMP (bone morphogenetic protein) signaling by antagonizing the inhibitory action of SMAD6 and SMAD7. Has a key role in regulation of cell surface receptor-mediated endocytosis and ubiquitin-dependent sorting of receptors to lysosomes. Endosomal localization of STAMBP is required for efficient EGFR degradation but not for its internalization. Involved in the negative regulation of PI3K-AKT-mTOR and RAS-MAP signaling pathways. The sequence is that of STAM-binding protein (Stambp) from Mus musculus (Mouse).